Consider the following 563-residue polypeptide: Minor fimbrium subunit Mfa1 (563 aa).

A signal peptide spans 1-19 (MKLNKMFLVGALLSLGFAS). Cys20 carries N-palmitoyl cysteine lipidation. The S-diacylglycerol cysteine moiety is linked to residue Cys20. Positions 20-49 (CSKEGNGPDPDNAAKSYMSMTLSMPMGSAR) are excised as a propeptide. The interval 504–543 (LVPDPDPSNPENPNNPDPNPDEPGTPVPTDPENPLPDQDT) is disordered. Pro residues predominate over residues 505-537 (VPDPDPSNPENPNNPDPNPDEPGTPVPTDPENP).

The protein belongs to the bacteroidetes fimbrillin superfamily. In terms of assembly, structural component of the fimbrial stalk. Minor fimbriae are composed of a structural subunit, most often Mfa1, and the accessory subunits Mfa3, Mfa4 and Mfa5. Mfa1 interacts with Mfa2; this anchors the fimbrium in the membrane. Fimbrium assembly occurs by linear, head-to-tail oligomerization of fimbrial subunits. This is mediated via insertion of a C-terminal beta-strand from one subunit into a groove in the N-terminal domain of the following subunit. Interacts with S.gordonii ssp5.

The protein localises to the fimbrium. Its subcellular location is the cell outer membrane. Structural subunit of the minor fimbriae. These filamentous pili are attached to the cell surface; they mediate biofilm formation, adhesion onto host cells and onto other bacteria that are part of the oral microbiome. They play an important role in invasion of periodontal tissues and are recognized as major virulence factors. Mfa1 orthologs from different strains have highly divergent sequences, and this correlates with pathogenicity. In Porphyromonas gingivalis (strain ATCC 33277 / DSM 20709 / CIP 103683 / JCM 12257 / NCTC 11834 / 2561), this protein is Minor fimbrium subunit Mfa1.